The chain runs to 361 residues: Phosphoserine aminotransferase (361 aa).

Position 43 (R43) interacts with L-glutamate. Residues 77-78 (AS), W103, T153, D173, and Q196 contribute to the pyridoxal 5'-phosphate site. Residue K197 is modified to N6-(pyridoxal phosphate)lysine. Residue 238 to 239 (NT) coordinates pyridoxal 5'-phosphate.

It belongs to the class-V pyridoxal-phosphate-dependent aminotransferase family. SerC subfamily. In terms of assembly, homodimer. The cofactor is pyridoxal 5'-phosphate.

The protein resides in the cytoplasm. It catalyses the reaction O-phospho-L-serine + 2-oxoglutarate = 3-phosphooxypyruvate + L-glutamate. It carries out the reaction 4-(phosphooxy)-L-threonine + 2-oxoglutarate = (R)-3-hydroxy-2-oxo-4-phosphooxybutanoate + L-glutamate. Its pathway is amino-acid biosynthesis; L-serine biosynthesis; L-serine from 3-phospho-D-glycerate: step 2/3. Catalyzes the reversible conversion of 3-phosphohydroxypyruvate to phosphoserine and of 3-hydroxy-2-oxo-4-phosphonooxybutanoate to phosphohydroxythreonine. In Alkalihalobacillus alcalophilus (Bacillus alcalophilus), this protein is Phosphoserine aminotransferase (serC).